A 262-amino-acid polypeptide reads, in one-letter code: Hydroxyethylthiazole kinase (262 aa).

Met50 is a binding site for substrate. The ATP site is built by Arg125 and Thr171. Gly198 contacts substrate.

The protein belongs to the Thz kinase family. The cofactor is Mg(2+).

The enzyme catalyses 5-(2-hydroxyethyl)-4-methylthiazole + ATP = 4-methyl-5-(2-phosphooxyethyl)-thiazole + ADP + H(+). It participates in cofactor biosynthesis; thiamine diphosphate biosynthesis; 4-methyl-5-(2-phosphoethyl)-thiazole from 5-(2-hydroxyethyl)-4-methylthiazole: step 1/1. Its function is as follows. Catalyzes the phosphorylation of the hydroxyl group of 4-methyl-5-beta-hydroxyethylthiazole (THZ). This chain is Hydroxyethylthiazole kinase, found in Citrobacter koseri (strain ATCC BAA-895 / CDC 4225-83 / SGSC4696).